A 281-amino-acid chain; its full sequence is Cytochrome bc1 complex cytochrome c subunit (281 aa).

A helical membrane pass occupies residues Ala17–Val37. 2 consecutive Cytochrome c domains span residues Ala52–Gly132 and Ala162–Lys240. Cys65, Cys68, His69, Cys175, Cys178, and His179 together coordinate heme c. A helical transmembrane segment spans residues Gly259–Ser279.

As to quaternary structure, the cytochrome bc1 complex is composed of a cytochrome b (QcrB), the Rieske iron-sulfur protein (QcrA) and a diheme cytochrome c (QcrC) subunit. The bc1 complex forms a supercomplex with cytochrome c oxidase (cytochrome aa3). In terms of processing, binds 2 heme c groups covalently per subunit.

The protein resides in the cell membrane. It catalyses the reaction a quinol + 2 Fe(III)-[cytochrome c](out) = a quinone + 2 Fe(II)-[cytochrome c](out) + 2 H(+)(out). In terms of biological role, cytochrome c1 subunit of the cytochrome bc1 complex, an essential component of the respiratory electron transport chain required for ATP synthesis. The bc1 complex catalyzes the oxidation of menaquinol and the reduction of cytochrome c in the respiratory chain. The bc1 complex operates through a Q-cycle mechanism that couples electron transfer to generation of the proton gradient that drives ATP synthesis. The protein is Cytochrome bc1 complex cytochrome c subunit (qcrC) of Corynebacterium diphtheriae (strain ATCC 700971 / NCTC 13129 / Biotype gravis).